Here is a 409-residue protein sequence, read N- to C-terminus: MAVKDVKKVVLAYSGGLDTSVILRWLQTTYGCEVVTFTADLGQGEELEPARKKAEMFGVKEIFVEDLRETFVKDFVFPMFRANTLYEGQYLLGTSIARPLIAQRQIEIAEAVGADAVAHGATGKGNDQVRFELAYYALKPDVTVISPWREWDLTSRTRLLAFAEEHQIPIAKDKRGEAPFSVDANLLHSSSEGKLLEDPAVAPDEIVFQRTISPEAAPDVATEIAIDFVSGDPVALNGVTLSPATLLARLNELGKANGIGRLDLVENRFVGMKSRGIYETPGGTILLAAHRSMETITLDREAGHLKDSLMPRYAELIYNGFWFSPERRMLQALIDESQHSVTGRVRLKLYKGNVICVGRESPHSLYDTRVVTFEDDEGAYNQSDALGFIKLNALRLRLGAQIGRRGGAL.

Residues 12 to 20 and Ala-39 each bind ATP; that span reads AYSGGLDTS. 2 residues coordinate L-citrulline: Tyr-90 and Ser-95. Gly-120 contributes to the ATP binding site. Positions 122, 126, and 127 each coordinate L-aspartate. Asn-126 contributes to the L-citrulline binding site. Arg-130, Ser-181, Ser-190, Glu-266, and Tyr-278 together coordinate L-citrulline.

This sequence belongs to the argininosuccinate synthase family. Type 1 subfamily. Homotetramer.

Its subcellular location is the cytoplasm. The catalysed reaction is L-citrulline + L-aspartate + ATP = 2-(N(omega)-L-arginino)succinate + AMP + diphosphate + H(+). The protein operates within amino-acid biosynthesis; L-arginine biosynthesis; L-arginine from L-ornithine and carbamoyl phosphate: step 2/3. The sequence is that of Argininosuccinate synthase from Gluconacetobacter diazotrophicus (strain ATCC 49037 / DSM 5601 / CCUG 37298 / CIP 103539 / LMG 7603 / PAl5).